The primary structure comprises 323 residues: NADH-cytochrome b5 reductase 2 (323 aa).

The chain crosses the membrane as a helical span at residues 30–46; that stretch reads LAPIYTAVGLTGLSVGL. Residues 72–177 form the FAD-binding FR-type domain; it reads QGWVDLKLSE…KGPLPKYQWE (106 aa). 180-215 is a binding site for FAD; sequence KHEHIALIAGGTGITPMYQLIRQIFKNPDDKTKVTL.

The protein belongs to the flavoprotein pyridine nucleotide cytochrome reductase family. Requires FAD as cofactor.

The protein localises to the mitochondrion outer membrane. It carries out the reaction 2 Fe(III)-[cytochrome b5] + NADH = 2 Fe(II)-[cytochrome b5] + NAD(+) + H(+). Functionally, may mediate the reduction of outer membrane cytochrome b5. In Aspergillus oryzae (strain ATCC 42149 / RIB 40) (Yellow koji mold), this protein is NADH-cytochrome b5 reductase 2 (mcr1).